A 216-amino-acid polypeptide reads, in one-letter code: Probable transaldolase (216 aa).

The active-site Schiff-base intermediate with substrate is Lys-83.

The protein belongs to the transaldolase family. Type 3B subfamily.

It is found in the cytoplasm. The enzyme catalyses D-sedoheptulose 7-phosphate + D-glyceraldehyde 3-phosphate = D-erythrose 4-phosphate + beta-D-fructose 6-phosphate. It functions in the pathway carbohydrate degradation; pentose phosphate pathway; D-glyceraldehyde 3-phosphate and beta-D-fructose 6-phosphate from D-ribose 5-phosphate and D-xylulose 5-phosphate (non-oxidative stage): step 2/3. Its function is as follows. Transaldolase is important for the balance of metabolites in the pentose-phosphate pathway. This is Probable transaldolase from Methanococcus aeolicus (strain ATCC BAA-1280 / DSM 17508 / OCM 812 / Nankai-3).